The sequence spans 116 residues: uncharacterized protein (116 aa).

A disordered region spans residues 97–116; sequence AKGKGNEGREEAEEASGKSK. Basic and acidic residues predominate over residues 100 to 116; it reads KGNEGREEAEEASGKSK.

Belongs to the UPF0440 family.

This is an uncharacterized protein from Pyrococcus horikoshii (strain ATCC 700860 / DSM 12428 / JCM 9974 / NBRC 100139 / OT-3).